The following is a 403-amino-acid chain: MSQFDRIHLVVLDSVGIGAAPDANDFVNAGVPDGASDTLGHISKTVGLAVPNMAKIGLGNIPRPQALKTVPAEENPSGYATKLQEVSLGKDTMTGHWEIMGLNITEPFDTFWNGFPEDIITKIEDFSGRKVIREANKPYSGTAVIDDFGPRQMETGELIIYTSADPVLQIAAHEDIIPLEELYRICEYARSITMERPALLGRIIARPYVGEPGNFTRTANRHDYAVSPFEDTVLNKLDQAGIDTYAVGKINDIFNGSGINHDMGHNKSNSHGIDTLIKTMGLSEFEKGFSFTNLVDFDALYGHRRDPHGYRDCLHEFDERLPEIISAMRDKDLLLITADHGNDPTYAGTDHTREYIPLLAYSPSFTGNGLIPVGHFADISATVADNFGVDTAMIGESFLQDLV.

Residues aspartate 13, aspartate 298, histidine 303, aspartate 339, histidine 340, and histidine 351 each contribute to the Mn(2+) site.

It belongs to the phosphopentomutase family. Mn(2+) serves as cofactor.

It is found in the cytoplasm. It carries out the reaction 2-deoxy-alpha-D-ribose 1-phosphate = 2-deoxy-D-ribose 5-phosphate. It catalyses the reaction alpha-D-ribose 1-phosphate = D-ribose 5-phosphate. Its pathway is carbohydrate degradation; 2-deoxy-D-ribose 1-phosphate degradation; D-glyceraldehyde 3-phosphate and acetaldehyde from 2-deoxy-alpha-D-ribose 1-phosphate: step 1/2. Isomerase that catalyzes the conversion of deoxy-ribose 1-phosphate (dRib-1-P) and ribose 1-phosphate (Rib-1-P) to deoxy-ribose 5-phosphate (dRib-5-P) and ribose 5-phosphate (Rib-5-P), respectively. The polypeptide is Phosphopentomutase 2 (Streptococcus agalactiae serotype Ia (strain ATCC 27591 / A909 / CDC SS700)).